A 460-amino-acid polypeptide reads, in one-letter code: Chromosomal replication initiator protein DnaA (460 aa).

The domain I, interacts with DnaA modulators stretch occupies residues 1 to 84 (MAVSLWQQCI…RFDIGSRPSA (84 aa)). Residues 84–123 (AKKPEPAPVAAVRVPNPQTKASVGTSFNTTEPVANANHRS) are domain II. The segment at 124-340 (NINPTYQFDN…GALNRVIANA (217 aa)) is domain III, AAA+ region. Residues Gly168, Gly170, Lys171, and Thr172 each contribute to the ATP site. The segment at 341-460 (NFTGRPITID…YANLIRTLSS (120 aa)) is domain IV, binds dsDNA.

This sequence belongs to the DnaA family. As to quaternary structure, oligomerizes as a right-handed, spiral filament on DNA at oriC.

The protein resides in the cytoplasm. In terms of biological role, plays an essential role in the initiation and regulation of chromosomal replication. ATP-DnaA binds to the origin of replication (oriC) to initiate formation of the DNA replication initiation complex once per cell cycle. Binds the DnaA box (a 9 base pair repeat at the origin) and separates the double-stranded (ds)DNA. Forms a right-handed helical filament on oriC DNA; dsDNA binds to the exterior of the filament while single-stranded (ss)DNA is stabiized in the filament's interior. The ATP-DnaA-oriC complex binds and stabilizes one strand of the AT-rich DNA unwinding element (DUE), permitting loading of DNA polymerase. After initiation quickly degrades to an ADP-DnaA complex that is not apt for DNA replication. Binds acidic phospholipids. The chain is Chromosomal replication initiator protein DnaA from Shewanella sp. (strain ANA-3).